The following is an 883-amino-acid chain: MQKIMHISVLLSPVLWGLIFGVSSNSIQIGGLFPRGADQEYSAFRVGMVQFSTSEFRLTPHIDNLEVANSFAVTNAFCSQFSRGVYAIFGFYDKKSVNTITSFCGTLHVSFITPSFPTDGTHPFVIQMRPDLKGALLSLIEYYQWDKFAYLYDSDRGLSTLQAVLDSAAEKKWQVTAINVGNINNDKKDETYRSLFQDLELKKERRVILDCERDKVNDIVDQVITIGKHVKGYHYIIANLGFTDGDLLKIQFGGANVSGFQIVDYDDSLVSKFIERWSTLEEKEYPGAHTATIKYTSALTYDAVQVMTEAFRNLRKQRIEISRRGNAGDCLANPAVPWGQGVEIERALKQVQVEGLSGNIKFDQNGKRINYTINIMELKTNGPRKIGYWSEVDKMVVTLTELPSGNDTSGLENKTVVVTTILESPYVMMKKNHEMLEGNERYEGYCVDLAAEIAKHCGFKYKLTIVGDGKYGARDADTKIWNGMVGELVYGKADIAIAPLTITLVREEVIDFSKPFMSLGISIMIKKPQKSKPGVFSFLDPLAYEIWMCIVFAYIGVSVVLFLVSRFSPYEWHTEEFEDGRETQSSESTNEFGIFNSLWFSLGAFMQQGCDISPRSLSGRIVGGVWWFFTLIIISSYTANLAAFLTVERMVSPIESAEDLSKQTEIAYGTLDSGSTKEFFRRSKIAVFDKMWTYMRSAEPSVFVRTTAEGVARVRKSKGKYAYLLESTMNEYIEQRKPCDTMKVGGNLDSKGYGIATPKGSSLGNAVNLAVLKLNEQGLLDKLKNKWWYDKGECGSGGGDSKEKTSALSLSNVAGVFYILVGGLGLAMLVALIEFCYKSRAEAKRMKVAKNPQNINPSSSQNSQNFATYKEGYNVYGIESVKI.

A signal peptide spans Met1–Gly21. Residues Val22–Ala543 lie on the Extracellular side of the membrane. Cys78 and Cys330 are disulfide-bonded. Asn256, Asn370, Asn406, and Asn413 each carry an N-linked (GlcNAc...) asparagine glycan. 3 residues coordinate L-glutamate: Pro499, Thr501, and Arg506. Residues Tyr544–Val564 traverse the membrane as a helical segment. The Cytoplasmic portion of the chain corresponds to Ser565–Glu591. Residues Phe592–Gln607 constitute an intramembrane region (helical; Pore-forming). Residues Gln608 to Cys610 lie within the membrane without spanning it. Cys610 is lipidated: S-palmitoyl cysteine. At Asp611 to Ser616 the chain is on the cytoplasmic side. Residues Leu617–Tyr637 traverse the membrane as a helical segment. Topologically, residues Thr638–Asn812 are extracellular. Residues Ser675 and Thr676 each coordinate L-glutamate. Position 683 is a phosphoserine; by PKC (Ser683). Position 717 is a phosphoserine; by PKG (Ser717). Glu726 contacts L-glutamate. Cysteines 739 and 794 form a disulfide. Residues Val813–Ile833 form a helical membrane-spanning segment. Residues Glu834–Ile883 are Cytoplasmic-facing. Cys836 is lipidated: S-palmitoyl cysteine. Residues Ser860 and Ser863 each carry the phosphoserine modification. The segment at Ala867–Gly877 is required for interaction with IQSEC1. Position 876 is a phosphotyrosine (Tyr876). Residue Ser880 is modified to Phosphoserine.

The protein belongs to the glutamate-gated ion channel (TC 1.A.10.1) family. GRIA2 subfamily. As to quaternary structure, homotetramer or heterotetramer of pore-forming glutamate receptor subunits. Tetramers may be formed by the dimerization of dimers. May interact with MPP4. Forms a ternary complex with GRIP1 and CSPG4. Interacts with ATAD1 in an ATP-dependent manner. ATAD1-catalyzed ATP hydrolysis disrupts binding to ATAD1 and to GRIP1 and leads to AMPAR complex disassembly. Interacts with GRIP2. Interacts with GRIP1. Interacts with NSF via its C-terminus. Interacts with CACNG2, PICK1 and GRIP2. Interacts with GRIA1 and SYNDIG1. Part of a complex containing GRIA2, NSF and NAPA and/or NAPB. Interacts with SNX27 (via PDZ domain); the interaction is required for recycling to the plasma membrane when endocytosed and prevent degradation in lysosomes. Interacts with LRFN1. Found in a complex with GRIA1, GRIA3, GRIA4, CNIH2, CNIH3, CACNG2, CACNG3, CACNG4, CACNG5, CACNG7 and CACNG8. Interacts with CACNG5. Interacts with OLFM2. Interacts with AP4B1, AP4E1 and AP4M1; probably indirect it mediates the somatodendritic localization of GRIA2 in neurons. Forms a complex with GRIP1, NSG1 and STX12; controls the intracellular fate of AMPAR and the endosomal sorting of the GRIA2 subunit toward recycling and membrane targeting. Interacts with IQSEC1; the interaction is required for ARF6 activation. Interacts (heterotetramer form) with CNIH2 and CNIH3; this interaction promotes expression at the plasma membrane and extensively modulates their gating properties by slowing deactivation and desensitization kinetics. Post-translationally, palmitoylated. Depalmitoylated upon L-glutamate stimulation. Cys-610 palmitoylation leads to Golgi retention and decreased cell surface expression. In contrast, Cys-836 palmitoylation does not affect cell surface expression but regulates stimulation-dependent endocytosis. Phosphorylation at Tyr-876 is required for interaction with IQSEC1 and ARF6 activation, which in turn triggers AMPAR internalization for persistent synaptic depression. In terms of processing, ubiquitinated by RNF167, leading to its degradation. Post-translationally, N-glycosylated. In terms of tissue distribution, detected in forebrain. Detected in dendrites of neuronal cells. Expressed in the pyramidal cell layers of CA1 and CA3 and in the granule cell layer of the dentate gyrus.

The protein resides in the cell membrane. It is found in the postsynaptic cell membrane. It localises to the postsynaptic density membrane. The enzyme catalyses Ca(2+)(in) = Ca(2+)(out). The catalysed reaction is Na(+)(in) = Na(+)(out). Its function is as follows. Ionotropic glutamate receptor that functions as a ligand-gated cation channel, gated by L-glutamate and glutamatergic agonists such as alpha-amino-3-hydroxy-5-methyl-4-isoxazolepropionic acid (AMPA), quisqualic acid, and kainic acid. L-glutamate acts as an excitatory neurotransmitter at many synapses in the central nervous system and plays an important role in fast excitatory synaptic transmission. Binding of the excitatory neurotransmitter L-glutamate induces a conformation change, leading to the opening of the cation channel, and thereby converts the chemical signal to an electrical impulse upon entry of monovalent and divalent cations such as sodium and calcium. The receptor then desensitizes rapidly and enters in a transient inactive state, characterized by the presence of bound agonist. In the presence of CACNG4 or CACNG7 or CACNG8, shows resensitization which is characterized by a delayed accumulation of current flux upon continued application of L-glutamate. Through complex formation with NSG1, GRIP1 and STX12 controls the intracellular fate of AMPAR and the endosomal sorting of the GRIA2 subunit toward recycling and membrane targeting. The protein is Glutamate receptor 2 of Rattus norvegicus (Rat).